A 274-amino-acid polypeptide reads, in one-letter code: Undecaprenyl-diphosphatase 1 (274 aa).

7 helical membrane passes run 47–67 (QVFLVVIQLGAILSVVLLYFN), 85–105 (VSMWIKIIISCIPATIVGIPF), 113–133 (FYNYQTVSITLISFGILFIMI), 150–170 (ITYTTAVLIGIFQLIAAVFPG), 196–216 (FFLAIPVMFGASLLKLFKFGL), 225–245 (ILFIGMLSAFIVSILAIKFLM), and 253–273 (FKAFGWYRIILGCAVLVYFLI).

It belongs to the UppP family.

It is found in the cell membrane. It catalyses the reaction di-trans,octa-cis-undecaprenyl diphosphate + H2O = di-trans,octa-cis-undecaprenyl phosphate + phosphate + H(+). Catalyzes the dephosphorylation of undecaprenyl diphosphate (UPP). Confers resistance to bacitracin. This Clostridium acetobutylicum (strain ATCC 824 / DSM 792 / JCM 1419 / IAM 19013 / LMG 5710 / NBRC 13948 / NRRL B-527 / VKM B-1787 / 2291 / W) protein is Undecaprenyl-diphosphatase 1.